Here is an 88-residue protein sequence, read N- to C-terminus: Small ribosomal subunit protein bS20 (88 aa).

A disordered region spans residues 1–20 (MANTKSARKSLIKSKQQRKC).

It belongs to the bacterial ribosomal protein bS20 family.

Functionally, binds directly to 16S ribosomal RNA. The polypeptide is Small ribosomal subunit protein bS20 (Blochmanniella pennsylvanica (strain BPEN)).